Consider the following 294-residue polypeptide: Protein CHLOROPLAST J-LIKE DOMAIN 1, chloroplastic (294 aa).

A chloroplast-targeting transit peptide spans 1-58; the sequence is MAPALSTSCSSVMAFSTSNALRYHHPQISLRNSLRAPKSPSFVRLPLGKVLQSRIVIR. Residues 59–164 are Stromal-facing; it reads AASSAAGNPQ…GPRFSRSSKN (106 aa). Residues 74–152 are J-like domain; that stretch reads NPYEVLGVNP…IKYADKQPII (79 aa). Residues 165–182 traverse the membrane as a helical segment; sequence DMLINLAISVVFSAWIAI. Residues 183-233 lie on the Chloroplast intermembrane side of the membrane; it reads KRNVEYKPLQFMSFVFVYRIFEKLKSFEAPSSPIYNEEGEESGRGLRMGKR. The chain crosses the membrane as a helical span at residues 234 to 256; that stretch reads LLRSLSLVFGSILLASLAYTGFL. The Stromal portion of the chain corresponds to 257–275; sequence NGIEYMGYSIPMVLYNNQE. Residues 276 to 293 traverse the membrane as a helical segment; that stretch reads LIVTASSAFMLYVIASFY. Position 294 (R294) is a topological domain, chloroplast intermembrane.

Interacts (via J-like domain) with ARC6 (via J domain).

It localises to the plastid. The protein localises to the chloroplast inner membrane. Functionally, probably involved in the regulation of the fatty acid metabolic process in chloroplasts, especially chloroplastic galactolipids monogalactosyldiacylglycerol (MGDG) and digalactosyldiacylglycerol (DGDG). The sequence is that of Protein CHLOROPLAST J-LIKE DOMAIN 1, chloroplastic from Arabidopsis thaliana (Mouse-ear cress).